A 561-amino-acid polypeptide reads, in one-letter code: Dihydroxy-acid dehydratase (561 aa).

Cys-50 contributes to the [2Fe-2S] cluster binding site. Asp-82 lines the Mg(2+) pocket. Cys-123 contacts [2Fe-2S] cluster. Asp-124 and Lys-125 together coordinate Mg(2+). The residue at position 125 (Lys-125) is an N6-carboxylysine. Position 195 (Cys-195) interacts with [2Fe-2S] cluster. Glu-447 lines the Mg(2+) pocket. Ser-473 functions as the Proton acceptor in the catalytic mechanism.

The protein belongs to the IlvD/Edd family. In terms of assembly, homodimer. The cofactor is [2Fe-2S] cluster. It depends on Mg(2+) as a cofactor.

It carries out the reaction (2R)-2,3-dihydroxy-3-methylbutanoate = 3-methyl-2-oxobutanoate + H2O. It catalyses the reaction (2R,3R)-2,3-dihydroxy-3-methylpentanoate = (S)-3-methyl-2-oxopentanoate + H2O. Its pathway is amino-acid biosynthesis; L-isoleucine biosynthesis; L-isoleucine from 2-oxobutanoate: step 3/4. It functions in the pathway amino-acid biosynthesis; L-valine biosynthesis; L-valine from pyruvate: step 3/4. In terms of biological role, functions in the biosynthesis of branched-chain amino acids. Catalyzes the dehydration of (2R,3R)-2,3-dihydroxy-3-methylpentanoate (2,3-dihydroxy-3-methylvalerate) into 2-oxo-3-methylpentanoate (2-oxo-3-methylvalerate) and of (2R)-2,3-dihydroxy-3-methylbutanoate (2,3-dihydroxyisovalerate) into 2-oxo-3-methylbutanoate (2-oxoisovalerate), the penultimate precursor to L-isoleucine and L-valine, respectively. The protein is Dihydroxy-acid dehydratase of Chloroflexus aurantiacus (strain ATCC 29366 / DSM 635 / J-10-fl).